Reading from the N-terminus, the 626-residue chain is ATP-dependent zinc metalloprotease FtsH (626 aa).

Residues M1 to N7 lie on the Cytoplasmic side of the membrane. A helical membrane pass occupies residues Y8 to F28. Topologically, residues Y29 to S108 are periplasmic. The chain crosses the membrane as a helical span at residues F109 to F129. Residues M130 to S626 lie on the Cytoplasmic side of the membrane. ATP is bound at residue G202–T209. Zn(2+) is bound at residue H424. E425 is an active-site residue. Positions 428 and 501 each coordinate Zn(2+).

In the central section; belongs to the AAA ATPase family. It in the C-terminal section; belongs to the peptidase M41 family. In terms of assembly, homohexamer. Zn(2+) serves as cofactor.

The protein resides in the cell inner membrane. In terms of biological role, acts as a processive, ATP-dependent zinc metallopeptidase for both cytoplasmic and membrane proteins. Plays a role in the quality control of integral membrane proteins. This Pseudothermotoga lettingae (strain ATCC BAA-301 / DSM 14385 / NBRC 107922 / TMO) (Thermotoga lettingae) protein is ATP-dependent zinc metalloprotease FtsH.